Reading from the N-terminus, the 1262-residue chain is Isoleucine--tRNA ligase, cytoplasmic (1262 aa).

N-acetylmethionine is present on Met-1. The short motif at 48-58 (PFATGLPHYGH) is the 'HIGH' region element. The 'KMSKS' region signature appears at 600–604 (KMSKR). Residue Lys-603 coordinates ATP. Position 1049 is a phosphoserine (Ser-1049). A Phosphothreonine modification is found at Thr-1058.

It belongs to the class-I aminoacyl-tRNA synthetase family. In terms of assembly, part of a multisubunit complex that groups tRNA ligases for Arg (RARS1), Asp (DARS1), Gln (QARS1), Ile (IARS1), Leu (LARS1), Lys (KARS1), Met (MARS1) the bifunctional ligase for Glu and Pro (EPRS1) and the auxiliary subunits AIMP1/p43, AIMP2/p38 and EEF1E1/p18.

Its subcellular location is the cytoplasm. It is found in the cytosol. It carries out the reaction tRNA(Ile) + L-isoleucine + ATP = L-isoleucyl-tRNA(Ile) + AMP + diphosphate. Functionally, catalyzes the specific attachment of an amino acid to its cognate tRNA in a 2 step reaction: the amino acid (AA) is first activated by ATP to form AA-AMP and then transferred to the acceptor end of the tRNA. The chain is Isoleucine--tRNA ligase, cytoplasmic (Iars1) from Mus musculus (Mouse).